We begin with the raw amino-acid sequence, 274 residues long: NAD-dependent protein deacylase (274 aa).

Residues 4–274 form the Deacetylase sirtuin-type domain; it reads CLLPSSDMDA…GELLPKALAP (271 aa). 29–48 lines the NAD(+) pocket; it reads GAGVSAESGVPTFRGAGGLW. The substrate site is built by Tyr-73 and Arg-76. Residue 111–114 participates in NAD(+) binding; sequence QNID. His-129 acts as the Proton acceptor in catalysis. The Zn(2+) site is built by Cys-137, Cys-140, Cys-178, and Cys-183. Residues 220–222, 246–248, and Cys-264 each bind NAD(+); these read GTS and NME.

The protein belongs to the sirtuin family. Class III subfamily. It depends on Zn(2+) as a cofactor.

Its subcellular location is the mitochondrion. The enzyme catalyses N(6)-malonyl-L-lysyl-[protein] + NAD(+) + H2O = 2''-O-malonyl-ADP-D-ribose + nicotinamide + L-lysyl-[protein]. It carries out the reaction N(6)-succinyl-L-lysyl-[protein] + NAD(+) + H2O = 2''-O-succinyl-ADP-D-ribose + nicotinamide + L-lysyl-[protein]. It catalyses the reaction N(6)-glutaryl-L-lysyl-[protein] + NAD(+) + H2O = 2''-O-glutaryl-ADP-D-ribose + nicotinamide + L-lysyl-[protein]. In terms of biological role, NAD-dependent lysine demalonylase, desuccinylase and deglutarylase that specifically removes malonyl, succinyl and glutaryl groups on target proteins. Has weak NAD-dependent protein deacetylase activity; however this activity may not be physiologically relevant in vivo. The chain is NAD-dependent protein deacylase from Daphnia pulex (Water flea).